The following is a 384-amino-acid chain: Dual-specificity RNA methyltransferase RlmN (384 aa).

Glu105 serves as the catalytic Proton acceptor. Residues 111–350 (EVDRATLCVS…TIVRKTRGDD (240 aa)) form the Radical SAM core domain. A disulfide bridge links Cys118 with Cys355. Positions 125, 129, and 132 each coordinate [4Fe-4S] cluster. Residues 179–180 (GE), Ser211, 233–235 (SLH), and Asn312 contribute to the S-adenosyl-L-methionine site. Cys355 serves as the catalytic S-methylcysteine intermediate.

It belongs to the radical SAM superfamily. RlmN family. The cofactor is [4Fe-4S] cluster.

The protein localises to the cytoplasm. The enzyme catalyses adenosine(2503) in 23S rRNA + 2 reduced [2Fe-2S]-[ferredoxin] + 2 S-adenosyl-L-methionine = 2-methyladenosine(2503) in 23S rRNA + 5'-deoxyadenosine + L-methionine + 2 oxidized [2Fe-2S]-[ferredoxin] + S-adenosyl-L-homocysteine. The catalysed reaction is adenosine(37) in tRNA + 2 reduced [2Fe-2S]-[ferredoxin] + 2 S-adenosyl-L-methionine = 2-methyladenosine(37) in tRNA + 5'-deoxyadenosine + L-methionine + 2 oxidized [2Fe-2S]-[ferredoxin] + S-adenosyl-L-homocysteine. Its function is as follows. Specifically methylates position 2 of adenine 2503 in 23S rRNA and position 2 of adenine 37 in tRNAs. m2A2503 modification seems to play a crucial role in the proofreading step occurring at the peptidyl transferase center and thus would serve to optimize ribosomal fidelity. This is Dual-specificity RNA methyltransferase RlmN from Escherichia coli O9:H4 (strain HS).